We begin with the raw amino-acid sequence, 240 residues long: Protein OPG176 (240 aa).

It belongs to the orthopoxvirus OPG176 family. In terms of assembly, tetramer. Interacts with host MYD88, TRF4, TICAM2 and MAL.

Functionally, BCL2-like protein which disrupts the host immune response by inhibiting the TLR4 signaling pathway leading to NF-kappa-B activation. Acts close to the plasma membrane and targets several host TIR-domain containing adapter proteins including MYD88, TIRAP, TRIF and TICAM2. In turn, blocks the host NF-kappa-B and TRIF-mediated IRF3 activation. The protein is Protein OPG176 (OPG176) of Bos taurus (Bovine).